The sequence spans 196 residues: MIPIVIEESGRGERAFDIYSRLLRERIVFLGEPVTSDSANRIVAQLLFLEADDPDKDIFLYINSPGGSVYDGLGIFDTMQHVKPDIHTVCVGLAASMGAFLLCAGAKGKRSSLLHSRIMIHQPLGGARGQASDIRIQADEILFIKDKLNKELSDRTGQPIERIREDTDRDFYMSPSEAIEYGIIDNVFNKRPINSV.

The active-site Nucleophile is the Ser-96. His-121 is a catalytic residue.

Belongs to the peptidase S14 family. Fourteen ClpP subunits assemble into 2 heptameric rings which stack back to back to give a disk-like structure with a central cavity, resembling the structure of eukaryotic proteasomes.

It is found in the cytoplasm. The enzyme catalyses Hydrolysis of proteins to small peptides in the presence of ATP and magnesium. alpha-casein is the usual test substrate. In the absence of ATP, only oligopeptides shorter than five residues are hydrolyzed (such as succinyl-Leu-Tyr-|-NHMec, and Leu-Tyr-Leu-|-Tyr-Trp, in which cleavage of the -Tyr-|-Leu- and -Tyr-|-Trp bonds also occurs).. Functionally, cleaves peptides in various proteins in a process that requires ATP hydrolysis. Has a chymotrypsin-like activity. Plays a major role in the degradation of misfolded proteins. The polypeptide is ATP-dependent Clp protease proteolytic subunit 1 (Prochlorococcus marinus (strain NATL2A)).